We begin with the raw amino-acid sequence, 436 residues long: Adenosylhomocysteinase (436 aa).

3 residues coordinate substrate: Thr-62, Asp-136, and Glu-161. An NAD(+)-binding site is contributed by 162-164; that stretch reads TTT. 2 residues coordinate substrate: Lys-191 and Asp-195. Residues Asn-196, 225-230, Glu-248, Asn-283, 304-306, and Asn-352 each bind NAD(+); these read GFGDVG and IGH.

This sequence belongs to the adenosylhomocysteinase family. NAD(+) is required as a cofactor.

Its subcellular location is the cytoplasm. It catalyses the reaction S-adenosyl-L-homocysteine + H2O = L-homocysteine + adenosine. Its pathway is amino-acid biosynthesis; L-homocysteine biosynthesis; L-homocysteine from S-adenosyl-L-homocysteine: step 1/1. Its function is as follows. May play a key role in the regulation of the intracellular concentration of adenosylhomocysteine. This chain is Adenosylhomocysteinase, found in Leptospira borgpetersenii serovar Hardjo-bovis (strain JB197).